The following is a 90-amino-acid chain: Small ribosomal subunit protein uS15 (90 aa).

It belongs to the universal ribosomal protein uS15 family. In terms of assembly, part of the 30S ribosomal subunit. Forms a bridge to the 50S subunit in the 70S ribosome, contacting the 23S rRNA.

In terms of biological role, one of the primary rRNA binding proteins, it binds directly to 16S rRNA where it helps nucleate assembly of the platform of the 30S subunit by binding and bridging several RNA helices of the 16S rRNA. Its function is as follows. Forms an intersubunit bridge (bridge B4) with the 23S rRNA of the 50S subunit in the ribosome. The sequence is that of Small ribosomal subunit protein uS15 from Helicobacter hepaticus (strain ATCC 51449 / 3B1).